The primary structure comprises 97 residues: MNIRPLHDRVIIKRQEVESKSAGGIVLTGSAAGKSTRGIVTAVGNGRVLDNGELKALDVKIGDTVIFSEGYGAKIEKIDNEEFLILTESDILAVVED.

The protein belongs to the GroES chaperonin family. Heptamer of 7 subunits arranged in a ring. Interacts with the chaperonin GroEL.

It is found in the cytoplasm. Together with the chaperonin GroEL, plays an essential role in assisting protein folding. The GroEL-GroES system forms a nano-cage that allows encapsulation of the non-native substrate proteins and provides a physical environment optimized to promote and accelerate protein folding. GroES binds to the apical surface of the GroEL ring, thereby capping the opening of the GroEL channel. In Buchnera aphidicola subsp. Pemphigus spyrothecae, this protein is Co-chaperonin GroES.